The primary structure comprises 1468 residues: DNA polymerase alpha catalytic subunit A (1468 aa).

Over residues Met1–Arg12 the composition is skewed to basic and acidic residues. Disordered stretches follow at residues Met1–Asp34, Gly71–Ile135, and Asn166–Ser205. Ser2 carries the N-acetylserine modification. Ser31 carries the phosphoserine modification. The segment covering Gly71–Asp80 has biased composition (basic and acidic residues). Phosphoserine is present on residues Ser82, Ser83, Ser84, Ser169, and Ser170. Over residues Asn166 to Lys176 the composition is skewed to polar residues. Phosphothreonine is present on Thr172. The segment covering Asn183–Ser205 has biased composition (basic and acidic residues). Phosphoserine occurs at positions 240 and 274. A disordered region spans residues Leu256–Asp275. The segment covering Ala266–Asp275 has biased composition (acidic residues). Phosphothreonine occurs at positions 309 and 313. The disordered stretch occupies residues Pro813–Asn837. The tract at residues Lys1246–Ser1381 is DNA-binding. Residues Cys1287, Cys1290, Cys1314, Cys1317, Cys1348, Cys1353, Cys1367, and Cys1372 each coordinate Zn(2+). The CysA-type zinc finger occupies Cys1287–Cys1317. The CysB motif signature appears at Cys1348–Cys1372.

Belongs to the DNA polymerase type-B family. In terms of assembly, DNA polymerase alpha:primase is a four subunit enzyme complex, which is assembled throughout the cell cycle, and consists of the two DNA polymerase subunits A POL1 and B POL12, and the DNA primase large PRI2 and small PRI1 subunits. Subunit B POL12 binds to subunit A POL1. POL1 interacts with CDC13, POB3, SPT16 and MCM10.

The protein resides in the nucleus. The catalysed reaction is DNA(n) + a 2'-deoxyribonucleoside 5'-triphosphate = DNA(n+1) + diphosphate. Its function is as follows. Catalytic component of DNA polymerase alpha, which in complex with DNA primase (DNA polymerase alpha:primase) constitutes a replicative polymerase. POL1 has a role in promoting telomere replication during interaction with CDC13. The polypeptide is DNA polymerase alpha catalytic subunit A (POL1) (Saccharomyces cerevisiae (strain ATCC 204508 / S288c) (Baker's yeast)).